The following is a 517-amino-acid chain: Amidophosphoribosyltransferase (517 aa).

At Met-1 the chain carries N-acetylmethionine. The propeptide occupies 1-11 (MELEELGIREE). Cys-12 serves as the catalytic Nucleophile. In terms of domain architecture, Glutamine amidotransferase type-2 spans 12–261 (CGVFGCIASG…PGEIVEISRH (250 aa)). Cys-280 contributes to the [4Fe-4S] cluster binding site. Mg(2+) is bound by residues Ser-327, Asp-389, and Asp-390. Cys-426, Cys-503, and Cys-506 together coordinate [4Fe-4S] cluster.

This sequence in the C-terminal section; belongs to the purine/pyrimidine phosphoribosyltransferase family. As to quaternary structure, homotetramer. The cofactor is Mg(2+). It depends on [4Fe-4S] cluster as a cofactor.

It catalyses the reaction 5-phospho-beta-D-ribosylamine + L-glutamate + diphosphate = 5-phospho-alpha-D-ribose 1-diphosphate + L-glutamine + H2O. Its pathway is purine metabolism; IMP biosynthesis via de novo pathway; N(1)-(5-phospho-D-ribosyl)glycinamide from 5-phospho-alpha-D-ribose 1-diphosphate: step 1/2. Catalyzes the formation of phosphoribosylamine from phosphoribosylpyrophosphate (PRPP) and glutamine. The protein is Amidophosphoribosyltransferase of Mus musculus (Mouse).